We begin with the raw amino-acid sequence, 144 residues long: Large ribosomal subunit protein uL16 (144 aa).

The span at 1 to 19 shows a compositional bias: basic residues; the sequence is MLLPKRVKYRRQHRPKTTG. The interval 1–23 is disordered; it reads MLLPKRVKYRRQHRPKTTGRSKG.

The protein belongs to the universal ribosomal protein uL16 family. In terms of assembly, part of the 50S ribosomal subunit.

In terms of biological role, binds 23S rRNA and is also seen to make contacts with the A and possibly P site tRNAs. This is Large ribosomal subunit protein uL16 from Staphylococcus carnosus (strain TM300).